Here is a 596-residue protein sequence, read N- to C-terminus: Chaperonin 60 subunit beta 2, chloroplastic (596 aa).

The N-terminal 50 residues, 1 to 50 (MASTFTATSSLGSLLAPNAIKLSSATSISSSSFGRRHNVCVRRSRPAIVC), are a transit peptide targeting the chloroplast. Residues S97 and S474 each carry the phosphoserine modification. Positions 388–489 (TQEAVNKRVV…KDTLENDEEK (102 aa)) form a coiled coil.

It belongs to the chaperonin (HSP60) family. Part of the Cpn60 complex composed of 7 alpha and 7 beta subunits. Can also form a complex composed of 14 beta subunits only. Both complexes show ATPase activity. The Cpn60 complex interacts with the Cpn10 complex. Interacts with RAB during heat stress.

The protein resides in the plastid. Its subcellular location is the chloroplast stroma. In terms of biological role, involved in protein assisted folding. This chain is Chaperonin 60 subunit beta 2, chloroplastic (CPN60B2), found in Arabidopsis thaliana (Mouse-ear cress).